The sequence spans 170 residues: Protein BTG1 (170 aa).

Belongs to the BTG family.

Its function is as follows. Anti-proliferative protein. This is Protein BTG1 (BTG1) from Gallus gallus (Chicken).